The sequence spans 514 residues: MNIQEEIKKRRTFAIISHPDAGKTTITEQLLYFGGEIREAGTVKGKKTGTFAKSDWMDIEKQRGISVTSSVMQFDYDGKRVNILDTPGHEDFSEDTYRTLMAVDAAVMVVDSAKGIEAQTKKLFEVVKHRGIPVFTFMNKLDRDGREPLDLLQELEEILGIASYPMNWPIGMGKAFEGLYDLYNQRLELYKGDERFASLEDGDKLFGSNPFYEQVKDDIELLNEAGNEFSEEAILAGELTPVFFGSALTNFGVQTFLEIFLKFAPEPHGHKKTDGEIVDPYDKDFSGFVFKIQANMDPRHRDRIAFVRIVSGEFERGMSVNLPRTGKGAKLSNVTQFMAESRENVINAVAGDIIGVYDTGTYQVGDTLTVGKNKFEFEPLPTFTPEIFMKVSAKNVMKQKSFHKGIEQLVQEGAVQLYKNYQTGEYMLGAVGQLQFEVFKHRMEGEYNAEVVMSPMGKKTVRWIKPEDLDERMSSSRNILAKDRFDQPVFLFENDFALRWFADKYPDVELEEKM.

In terms of domain architecture, tr-type G spans 8-268; that stretch reads KKRRTFAIIS…IFLKFAPEPH (261 aa). Residues 17–24, 85–89, and 139–142 each bind GTP; these read SHPDAGKT, DTPGH, and NKLD.

This sequence belongs to the TRAFAC class translation factor GTPase superfamily. Classic translation factor GTPase family. PrfC subfamily.

The protein resides in the cytoplasm. In terms of biological role, increases the formation of ribosomal termination complexes and stimulates activities of RF-1 and RF-2. It binds guanine nucleotides and has strong preference for UGA stop codons. It may interact directly with the ribosome. The stimulation of RF-1 and RF-2 is significantly reduced by GTP and GDP, but not by GMP. This chain is Peptide chain release factor 3, found in Streptococcus pneumoniae serotype 2 (strain D39 / NCTC 7466).